Here is a 354-residue protein sequence, read N- to C-terminus: Phosphate acyltransferase (354 aa).

It belongs to the PlsX family. In terms of assembly, homodimer. Probably interacts with PlsY.

It localises to the cytoplasm. It carries out the reaction a fatty acyl-[ACP] + phosphate = an acyl phosphate + holo-[ACP]. It functions in the pathway lipid metabolism; phospholipid metabolism. Catalyzes the reversible formation of acyl-phosphate (acyl-PO(4)) from acyl-[acyl-carrier-protein] (acyl-ACP). This enzyme utilizes acyl-ACP as fatty acyl donor, but not acyl-CoA. The chain is Phosphate acyltransferase from Bordetella petrii (strain ATCC BAA-461 / DSM 12804 / CCUG 43448).